We begin with the raw amino-acid sequence, 292 residues long: tRNA-cytidine(32) 2-sulfurtransferase (292 aa).

Residues S53–S58 carry the PP-loop motif motif. [4Fe-4S] cluster contacts are provided by C128, C131, and C219.

Belongs to the TtcA family. Homodimer. Mg(2+) is required as a cofactor. Requires [4Fe-4S] cluster as cofactor.

The protein localises to the cytoplasm. It catalyses the reaction cytidine(32) in tRNA + S-sulfanyl-L-cysteinyl-[cysteine desulfurase] + AH2 + ATP = 2-thiocytidine(32) in tRNA + L-cysteinyl-[cysteine desulfurase] + A + AMP + diphosphate + H(+). Its pathway is tRNA modification. Catalyzes the ATP-dependent 2-thiolation of cytidine in position 32 of tRNA, to form 2-thiocytidine (s(2)C32). The sulfur atoms are provided by the cysteine/cysteine desulfurase (IscS) system. The protein is tRNA-cytidine(32) 2-sulfurtransferase of Cereibacter sphaeroides (strain ATCC 17029 / ATH 2.4.9) (Rhodobacter sphaeroides).